The chain runs to 139 residues: Protein archease (139 aa).

The Ca(2+) site is built by Asp12, Asp138, and Ile139.

This sequence belongs to the archease family.

Activates the tRNA-splicing ligase complex by facilitating the enzymatic turnover of catalytic subunit RtcB. Acts by promoting the guanylylation of RtcB, a key intermediate step in tRNA ligation. Can also alter the NTP specificity of RtcB such that ATP, dGTP or ITP is used efficiently. This Sulfurisphaera tokodaii (strain DSM 16993 / JCM 10545 / NBRC 100140 / 7) (Sulfolobus tokodaii) protein is Protein archease.